A 649-amino-acid chain; its full sequence is Glycerol-3-phosphate dehydrogenase, mitochondrial (649 aa).

69–97 is a binding site for FAD; it reads DVLIIGGGATGTGVAVDASTRGLNVCLLE.

The protein belongs to the FAD-dependent glycerol-3-phosphate dehydrogenase family. FAD serves as cofactor.

It is found in the mitochondrion. The enzyme catalyses a quinone + sn-glycerol 3-phosphate = dihydroxyacetone phosphate + a quinol. Its pathway is polyol metabolism; glycerol degradation via glycerol kinase pathway; glycerone phosphate from sn-glycerol 3-phosphate (anaerobic route): step 1/1. This Schizosaccharomyces pombe (strain 972 / ATCC 24843) (Fission yeast) protein is Glycerol-3-phosphate dehydrogenase, mitochondrial (gut2).